Consider the following 503-residue polypeptide: Lactation elevated protein 1 homolog B (503 aa).

A disordered region spans residues 108-155 (LQNQPTSELQDKVGSRETVNICRPDENVSNEKEDQQEESSKPHPPQGY). Positions 130 to 148 (RPDENVSNEKEDQQEESSK) are enriched in basic and acidic residues. Position 159–166 (159–166 (GNVGTGKT)) interacts with ATP.

Belongs to the AFG1 ATPase family.

The protein is Lactation elevated protein 1 homolog B (lace1b) of Danio rerio (Zebrafish).